The primary structure comprises 165 residues: 2-C-methyl-D-erythritol 2,4-cyclodiphosphate synthase (165 aa).

A divalent metal cation is bound by residues D8 and H10. 4-CDP-2-C-methyl-D-erythritol 2-phosphate contacts are provided by residues 8–10 (DVH) and 34–35 (HS). H42 contributes to the a divalent metal cation binding site. 4-CDP-2-C-methyl-D-erythritol 2-phosphate is bound by residues 56–58 (DIG), 61–65 (FPDTD), 100–106 (AQAPKMA), 132–135 (TTTE), F139, and R142.

It belongs to the IspF family. In terms of assembly, homotrimer. A divalent metal cation is required as a cofactor.

It carries out the reaction 4-CDP-2-C-methyl-D-erythritol 2-phosphate = 2-C-methyl-D-erythritol 2,4-cyclic diphosphate + CMP. It participates in isoprenoid biosynthesis; isopentenyl diphosphate biosynthesis via DXP pathway; isopentenyl diphosphate from 1-deoxy-D-xylulose 5-phosphate: step 4/6. In terms of biological role, involved in the biosynthesis of isopentenyl diphosphate (IPP) and dimethylallyl diphosphate (DMAPP), two major building blocks of isoprenoid compounds. Catalyzes the conversion of 4-diphosphocytidyl-2-C-methyl-D-erythritol 2-phosphate (CDP-ME2P) to 2-C-methyl-D-erythritol 2,4-cyclodiphosphate (ME-CPP) with a corresponding release of cytidine 5-monophosphate (CMP). The chain is 2-C-methyl-D-erythritol 2,4-cyclodiphosphate synthase from Pectobacterium atrosepticum (strain SCRI 1043 / ATCC BAA-672) (Erwinia carotovora subsp. atroseptica).